The following is a 285-amino-acid chain: Bifunctional protein FolD (285 aa).

NADP(+)-binding positions include 169–171, serine 194, and isoleucine 235; that span reads GRS.

This sequence belongs to the tetrahydrofolate dehydrogenase/cyclohydrolase family. In terms of assembly, homodimer.

The catalysed reaction is (6R)-5,10-methylene-5,6,7,8-tetrahydrofolate + NADP(+) = (6R)-5,10-methenyltetrahydrofolate + NADPH. It carries out the reaction (6R)-5,10-methenyltetrahydrofolate + H2O = (6R)-10-formyltetrahydrofolate + H(+). It participates in one-carbon metabolism; tetrahydrofolate interconversion. Functionally, catalyzes the oxidation of 5,10-methylenetetrahydrofolate to 5,10-methenyltetrahydrofolate and then the hydrolysis of 5,10-methenyltetrahydrofolate to 10-formyltetrahydrofolate. This chain is Bifunctional protein FolD, found in Microcystis aeruginosa (strain NIES-843 / IAM M-2473).